The following is a 475-amino-acid chain: Aspartyl/glutamyl-tRNA(Asn/Gln) amidotransferase subunit B (475 aa).

The protein belongs to the GatB/GatE family. GatB subfamily. Heterotrimer of A, B and C subunits.

It catalyses the reaction L-glutamyl-tRNA(Gln) + L-glutamine + ATP + H2O = L-glutaminyl-tRNA(Gln) + L-glutamate + ADP + phosphate + H(+). The catalysed reaction is L-aspartyl-tRNA(Asn) + L-glutamine + ATP + H2O = L-asparaginyl-tRNA(Asn) + L-glutamate + ADP + phosphate + 2 H(+). Its function is as follows. Allows the formation of correctly charged Asn-tRNA(Asn) or Gln-tRNA(Gln) through the transamidation of misacylated Asp-tRNA(Asn) or Glu-tRNA(Gln) in organisms which lack either or both of asparaginyl-tRNA or glutaminyl-tRNA synthetases. The reaction takes place in the presence of glutamine and ATP through an activated phospho-Asp-tRNA(Asn) or phospho-Glu-tRNA(Gln). The polypeptide is Aspartyl/glutamyl-tRNA(Asn/Gln) amidotransferase subunit B (Pelodictyon phaeoclathratiforme (strain DSM 5477 / BU-1)).